Here is a 390-residue protein sequence, read N- to C-terminus: S-adenosylmethionine synthase 4 (390 aa).

Glutamate 9 is a binding site for Mg(2+). An ATP-binding site is contributed by histidine 15. Glutamate 43 is a binding site for K(+). The L-methionine site is built by glutamate 56 and glutamine 99. ATP contacts are provided by residues 167-169, 235-238, aspartate 246, 252-253, alanine 269, lysine 273, and lysine 277; these read DGK, SGRF, and RK. Residue aspartate 246 coordinates L-methionine. Residue lysine 277 coordinates L-methionine.

Belongs to the AdoMet synthase family. Homotetramer. Mn(2+) is required as a cofactor. Mg(2+) serves as cofactor. Requires Co(2+) as cofactor. The cofactor is K(+).

The protein resides in the cytoplasm. The catalysed reaction is L-methionine + ATP + H2O = S-adenosyl-L-methionine + phosphate + diphosphate. Its pathway is amino-acid biosynthesis; S-adenosyl-L-methionine biosynthesis; S-adenosyl-L-methionine from L-methionine: step 1/1. Its function is as follows. Catalyzes the formation of S-adenosylmethionine from methionine and ATP. The reaction comprises two steps that are both catalyzed by the same enzyme: formation of S-adenosylmethionine (AdoMet) and triphosphate, and subsequent hydrolysis of the triphosphate. This Populus trichocarpa (Western balsam poplar) protein is S-adenosylmethionine synthase 4 (METK4).